We begin with the raw amino-acid sequence, 258 residues long: Aquaglyceroporin (258 aa).

The Cytoplasmic portion of the chain corresponds to 1–16 (MKVTFGNEYIKNFLGE). The chain crosses the membrane as a helical span at residues 17–37 (FIGTFVLMFLGEGTTANHFAV). Residues 38 to 45 (PIKNDWLR) are Extracellular-facing. A helical membrane pass occupies residues 46–66 (LCIGWGLGVFFGILISAKLSG). Positions 67 and 70 each coordinate glycerol. Over 67–87 (AHLNLAVTVGLSTIKKFNYKQ) the chain is Cytoplasmic. Residues 88–108 (IPLYFAGQLLGALSATASVYG) form a helical membrane-spanning segment. The Extracellular portion of the chain corresponds to 109–133 (LYYGFVSDQTIPKFSWETGKHANVH). The helical transmembrane segment at 134–154 (IASAFMHEFILTGILLLIILS) threads the bilayer. The Cytoplasmic segment spans residues 155–171 (VTDENICGKFHVLKVSS). The helical transmembrane segment at 172–192 (IVGLAIICIGISFGGNTGFAL) threads the bilayer. Residues Gly-189, Phe-190, Asn-193, and Arg-196 each coordinate glycerol. At 193–217 (NPSRDLGARILSAIAYGFEAFTRDK) the chain is on the extracellular side. Residues 218–238 (CYFWIPLIAPIIGSIIFCQIY) traverse the membrane as a helical segment. Topologically, residues 239–258 (DKIVAPLVVISEHDKGALEI) are cytoplasmic.

It belongs to the MIP/aquaporin (TC 1.A.8) family.

Its subcellular location is the cell membrane. It carries out the reaction H2O(in) = H2O(out). It catalyses the reaction glycerol(in) = glycerol(out). The enzyme catalyses urea(in) = urea(out). Functionally, mediates water and glycerol transport across the cell membrane. Permeable to urea. Required for efficient progression of parasites through the liver stages. The protein is Aquaglyceroporin of Plasmodium berghei (strain Anka).